Consider the following 591-residue polypeptide: L-fucose isomerase (591 aa).

Catalysis depends on proton acceptor residues E337 and D361. The Mn(2+) site is built by E337, D361, and H528.

It belongs to the L-fucose isomerase family. Homohexamer. Mn(2+) serves as cofactor.

It is found in the cytoplasm. It catalyses the reaction L-fucose = L-fuculose. The protein operates within carbohydrate degradation; L-fucose degradation; L-lactaldehyde and glycerone phosphate from L-fucose: step 1/3. Functionally, converts the aldose L-fucose into the corresponding ketose L-fuculose. The protein is L-fucose isomerase of Escherichia coli O6:H1 (strain CFT073 / ATCC 700928 / UPEC).